A 142-amino-acid polypeptide reads, in one-letter code: MGLRREARELALQMLYAQDTLQGSLRDTLRGFREGVETGERTREFAEALVQGVMEHREAIDQAIVARSKNWALSRMPRVDLNIMRMAAYELMFKRDIPKKVSINEAIEIAKKYGDKESPAFVNGILDELEACPKDEERSDTE.

This sequence belongs to the NusB family.

In terms of biological role, involved in transcription antitermination. Required for transcription of ribosomal RNA (rRNA) genes. Binds specifically to the boxA antiterminator sequence of the ribosomal RNA (rrn) operons. In Trichlorobacter lovleyi (strain ATCC BAA-1151 / DSM 17278 / SZ) (Geobacter lovleyi), this protein is Transcription antitermination protein NusB.